The primary structure comprises 275 residues: Large ribosomal subunit protein uL2 (275 aa).

The disordered stretch occupies residues 218 to 275; the sequence is RPQTRGSAMNPIDHPHGGGEGKTNSGRHPVSPWGMPTKGYKTRKKKASDKLIISKRKK. Positions 257–275 are enriched in basic residues; it reads YKTRKKKASDKLIISKRKK.

This sequence belongs to the universal ribosomal protein uL2 family. As to quaternary structure, part of the 50S ribosomal subunit. Forms a bridge to the 30S subunit in the 70S ribosome.

In terms of biological role, one of the primary rRNA binding proteins. Required for association of the 30S and 50S subunits to form the 70S ribosome, for tRNA binding and peptide bond formation. It has been suggested to have peptidyltransferase activity; this is somewhat controversial. Makes several contacts with the 16S rRNA in the 70S ribosome. The sequence is that of Large ribosomal subunit protein uL2 from Sulfurovum sp. (strain NBC37-1).